A 183-amino-acid chain; its full sequence is Probable chemoreceptor glutamine deamidase CheD (183 aa).

Belongs to the CheD family.

It catalyses the reaction L-glutaminyl-[protein] + H2O = L-glutamyl-[protein] + NH4(+). In terms of biological role, probably deamidates glutamine residues to glutamate on methyl-accepting chemotaxis receptors (MCPs), playing an important role in chemotaxis. The polypeptide is Probable chemoreceptor glutamine deamidase CheD (Sinorhizobium medicae (strain WSM419) (Ensifer medicae)).